A 233-amino-acid chain; its full sequence is ATP synthase subunit a (233 aa).

Transmembrane regions (helical) follow at residues 29-49 (FKHV…SFIV), 60-80 (LQNI…SITG), 89-109 (VLIV…VPGF), 115-135 (NINT…YIGI), 143-163 (IKHF…LELI), 185-205 (FVLI…IYFL), and 206-226 (FTLA…IYLK).

Belongs to the ATPase A chain family. In terms of assembly, F-type ATPases have 2 components, CF(1) - the catalytic core - and CF(0) - the membrane proton channel. CF(1) has five subunits: alpha(3), beta(3), gamma(1), delta(1), epsilon(1). CF(0) has three main subunits: a(1), b(2) and c(9-12). The alpha and beta chains form an alternating ring which encloses part of the gamma chain. CF(1) is attached to CF(0) by a central stalk formed by the gamma and epsilon chains, while a peripheral stalk is formed by the delta and b chains.

The protein resides in the cell inner membrane. In terms of biological role, key component of the proton channel; it plays a direct role in the translocation of protons across the membrane. This Oleidesulfovibrio alaskensis (strain ATCC BAA-1058 / DSM 17464 / G20) (Desulfovibrio alaskensis) protein is ATP synthase subunit a.